The chain runs to 352 residues: tRNA pseudouridine synthase D (352 aa).

The Nucleophile role is filled by Asp-78. Residues 153-299 (GVPNYYGEQR…LDQDRRPLLL (147 aa)) form the TRUD domain.

This sequence belongs to the pseudouridine synthase TruD family.

The enzyme catalyses uridine(13) in tRNA = pseudouridine(13) in tRNA. Responsible for synthesis of pseudouridine from uracil-13 in transfer RNAs. The chain is tRNA pseudouridine synthase D from Aeromonas hydrophila subsp. hydrophila (strain ATCC 7966 / DSM 30187 / BCRC 13018 / CCUG 14551 / JCM 1027 / KCTC 2358 / NCIMB 9240 / NCTC 8049).